A 362-amino-acid chain; its full sequence is NAD(P)H-quinone oxidoreductase subunit 1, chloroplastic (362 aa).

Transmembrane regions (helical) follow at residues 26–48, 97–119, 126–148, 163–185, 254–276, 296–318, and 338–360; these read LIWI…VIVW, FSIG…PLGY, LSIG…LMAG, AAAQ…SLLS, LFYL…LYLG, IIGI…LFLF, and LGWK…FQLV.

It belongs to the complex I subunit 1 family. As to quaternary structure, NDH is composed of at least 16 different subunits, 5 of which are encoded in the nucleus.

The protein localises to the plastid. It localises to the chloroplast thylakoid membrane. It carries out the reaction a plastoquinone + NADH + (n+1) H(+)(in) = a plastoquinol + NAD(+) + n H(+)(out). It catalyses the reaction a plastoquinone + NADPH + (n+1) H(+)(in) = a plastoquinol + NADP(+) + n H(+)(out). Its function is as follows. NDH shuttles electrons from NAD(P)H:plastoquinone, via FMN and iron-sulfur (Fe-S) centers, to quinones in the photosynthetic chain and possibly in a chloroplast respiratory chain. The immediate electron acceptor for the enzyme in this species is believed to be plastoquinone. Couples the redox reaction to proton translocation, and thus conserves the redox energy in a proton gradient. In Zea mays (Maize), this protein is NAD(P)H-quinone oxidoreductase subunit 1, chloroplastic (ndhA).